Consider the following 32-residue polypeptide: MSDIN-like toxin proprotein 3 (32 aa).

Positions 1 to 10 (MSDINATRLP) are excised as a propeptide. The cyclopeptide (Ser-Pro) cross-link spans 11 to 17 (SFFFPIP). The propeptide occupies 18-32 (CISDDIEMVLTRGER).

This sequence belongs to the MSDIN fungal toxin family. Post-translationally, processed by the macrocyclase-peptidase enzyme POPB to yield a toxic cyclic heptapeptide. POPB first removes 10 residues from the N-terminus. Conformational trapping of the remaining peptide forces the enzyme to release this intermediate rather than proceed to macrocyclization. The enzyme rebinds the remaining peptide in a different conformation and catalyzes macrocyclization of the N-terminal 8 residues.

In terms of biological role, probable toxin that belongs to the MSDIN-like toxin family responsible for a large number of food poisoning cases and deaths. The chain is MSDIN-like toxin proprotein 3 from Amanita phalloides (Death cap).